The chain runs to 181 residues: Oligoribonuclease (181 aa).

In terms of domain architecture, Exonuclease spans 8–171 (LIWIDLEMTG…QDIQESIAEL (164 aa)). The active site involves Y129.

The protein belongs to the oligoribonuclease family.

It localises to the cytoplasm. Functionally, 3'-to-5' exoribonuclease specific for small oligoribonucleotides. This is Oligoribonuclease from Shewanella sp. (strain ANA-3).